Reading from the N-terminus, the 409-residue chain is Transforming growth factor beta-3 proprotein (409 aa).

Positions 1–21 (MHLQRALVVLALLNFATVSLS) are cleaved as a signal peptide. Asn72, Asn133, and Asn140 each carry an N-linked (GlcNAc...) asparagine glycan. The Cell attachment site motif lies at 259–261 (RGD). 4 disulfides stabilise this stretch: Cys304–Cys313, Cys312–Cys375, Cys341–Cys406, and Cys345–Cys408.

It belongs to the TGF-beta family. Interacts with ASPN. Latency-associated peptide: Homodimer; disulfide-linked. Latency-associated peptide: Interacts with Transforming growth factor beta-3 (TGF-beta-3) chain; interaction is non-covalent and maintains (TGF-beta-3) in a latent state. Latency-associated peptide: Interacts with LRRC32/GARP; leading to regulate activation of TGF-beta-3 and promote epithelial fusion during palate development. Latency-associated peptide: Interacts (via cell attachment site) with integrins, leading to release of the active TGF-beta-3. Transforming growth factor beta-3: Homodimer; disulfide-linked. Transforming growth factor beta-3: Interacts with TGF-beta receptors (TGFBR1 and TGFBR2), leading to signal transduction. In terms of processing, transforming growth factor beta-3 proprotein: The precursor proprotein is cleaved in the Golgi apparatus to form Transforming growth factor beta-3 (TGF-beta-3) and Latency-associated peptide (LAP) chains, which remain non-covalently linked, rendering TGF-beta-3 inactive.

Its subcellular location is the secreted. The protein resides in the extracellular space. The protein localises to the extracellular matrix. Transforming growth factor beta-3 proprotein: Precursor of the Latency-associated peptide (LAP) and Transforming growth factor beta-3 (TGF-beta-3) chains, which constitute the regulatory and active subunit of TGF-beta-3, respectively. Its function is as follows. Required to maintain the Transforming growth factor beta-3 (TGF-beta-3) chain in a latent state during storage in extracellular matrix. Associates non-covalently with TGF-beta-3 and regulates its activation via interaction with 'milieu molecules', such as LTBP1 and LRRC32/GARP, that control activation of TGF-beta-3. Interaction with integrins results in distortion of the Latency-associated peptide chain and subsequent release of the active TGF-beta-3. In terms of biological role, transforming growth factor beta-3: Multifunctional protein that regulates embryogenesis and cell differentiation and is required in various processes such as secondary palate development. Activation into mature form follows different steps: following cleavage of the proprotein in the Golgi apparatus, Latency-associated peptide (LAP) and Transforming growth factor beta-3 (TGF-beta-3) chains remain non-covalently linked rendering TGF-beta-3 inactive during storage in extracellular matrix. At the same time, LAP chain interacts with 'milieu molecules', such as LTBP1 and LRRC32/GARP that control activation of TGF-beta-3 and maintain it in a latent state during storage in extracellular milieus. TGF-beta-3 is released from LAP by integrins: integrin-binding results in distortion of the LAP chain and subsequent release of the active TGF-beta-3. Once activated following release of LAP, TGF-beta-3 acts by binding to TGF-beta receptors (TGFBR1 and TGFBR2), which transduce signal. This is Transforming growth factor beta-3 proprotein (TGFB3) from Sus scrofa (Pig).